Here is a 743-residue protein sequence, read N- to C-terminus: Ribosome biogenesis protein BOP1 homolog (743 aa).

WD repeat units follow at residues 365-404, 575-615, 617-655, 659-701, and 712-743; these read GHTATVRSVSVSPNGQYLATGCDDHLVRVYEVQTGRLMKR, KFSE…RRFK, SGGVTTCLSIHPEGDNFLVGDTTSHTSWFDMDFSDKPYK, SHKG…DYNK, and KHQRSVYAVAWHPSLAWLFTSTEDGVVTAWTE.

Belongs to the WD repeat BOP1/ERB1 family.

It is found in the nucleus. The protein localises to the nucleolus. The protein resides in the nucleoplasm. Its function is as follows. Required for maturation of ribosomal RNAs and formation of the large ribosomal subunit. The sequence is that of Ribosome biogenesis protein BOP1 homolog from Leishmania braziliensis.